A 406-amino-acid chain; its full sequence is MLQMPSKQPISAGIVIVAAGRGERAGSSKEGPKQYRMIGGKPVIVHTLENFMTWEPATEIVVVIHPDDEALFARALRHIISATPIETVHGGPTRQQSVLAGLRHLKDKRISHVLIHDAVRPFFDHVLLDRIAESLDNGAQAVLPAIPVTDTLKRADSAGTVLTTVSREHLYAAQTPQSFAFETILDAHEKAAASGRSDFTDDASIAEWAGIPVTIVAGTPDNVKLTVKKDIAMADDKLSASLLPDVRTGNGYDVHQLEAGDGVTLCGVFIPHDQKLKGHSDADVALHALTDALLATCGAGDIGDHFPPSDPQWKGAASRIFIEHAARIVREHGGTIMNADVSLIAEAPKVGPHRESMRMRLSEYLGIDIERCSVKATTNETIGFVGRREGIAAIATATVVYRGVKR.

Positions Met-1–Val-246 are 2-C-methyl-D-erythritol 4-phosphate cytidylyltransferase. The interval Arg-247–Arg-406 is 2-C-methyl-D-erythritol 2,4-cyclodiphosphate synthase. Residues Asp-253 and His-255 each coordinate a divalent metal cation. 4-CDP-2-C-methyl-D-erythritol 2-phosphate is bound by residues Asp-253–His-255 and His-279–Ser-280. Residue His-287 coordinates a divalent metal cation. Residues Asp-301–Gly-303, Thr-377–Glu-380, Phe-384, and Arg-387 contribute to the 4-CDP-2-C-methyl-D-erythritol 2-phosphate site.

The protein in the N-terminal section; belongs to the IspD/TarI cytidylyltransferase family. IspD subfamily. It in the C-terminal section; belongs to the IspF family. Requires a divalent metal cation as cofactor.

It catalyses the reaction 2-C-methyl-D-erythritol 4-phosphate + CTP + H(+) = 4-CDP-2-C-methyl-D-erythritol + diphosphate. The enzyme catalyses 4-CDP-2-C-methyl-D-erythritol 2-phosphate = 2-C-methyl-D-erythritol 2,4-cyclic diphosphate + CMP. It functions in the pathway isoprenoid biosynthesis; isopentenyl diphosphate biosynthesis via DXP pathway; isopentenyl diphosphate from 1-deoxy-D-xylulose 5-phosphate: step 2/6. Its pathway is isoprenoid biosynthesis; isopentenyl diphosphate biosynthesis via DXP pathway; isopentenyl diphosphate from 1-deoxy-D-xylulose 5-phosphate: step 4/6. Its function is as follows. Bifunctional enzyme that catalyzes the formation of 4-diphosphocytidyl-2-C-methyl-D-erythritol from CTP and 2-C-methyl-D-erythritol 4-phosphate (MEP) (IspD), and catalyzes the conversion of 4-diphosphocytidyl-2-C-methyl-D-erythritol 2-phosphate (CDP-ME2P) to 2-C-methyl-D-erythritol 2,4-cyclodiphosphate (ME-CPP) with a corresponding release of cytidine 5-monophosphate (CMP) (IspF). The sequence is that of Bifunctional enzyme IspD/IspF from Rhizobium leguminosarum bv. trifolii (strain WSM2304).